A 387-amino-acid polypeptide reads, in one-letter code: Exodeoxyribonuclease 7 large subunit (387 aa).

This sequence belongs to the XseA family. Heterooligomer composed of large and small subunits.

Its subcellular location is the cytoplasm. The catalysed reaction is Exonucleolytic cleavage in either 5'- to 3'- or 3'- to 5'-direction to yield nucleoside 5'-phosphates.. In terms of biological role, bidirectionally degrades single-stranded DNA into large acid-insoluble oligonucleotides, which are then degraded further into small acid-soluble oligonucleotides. This chain is Exodeoxyribonuclease 7 large subunit, found in Campylobacter jejuni (strain RM1221).